The sequence spans 361 residues: Phosphate acyltransferase (361 aa).

Belongs to the PlsX family. As to quaternary structure, homodimer. Probably interacts with PlsY.

Its subcellular location is the cytoplasm. The enzyme catalyses a fatty acyl-[ACP] + phosphate = an acyl phosphate + holo-[ACP]. It participates in lipid metabolism; phospholipid metabolism. In terms of biological role, catalyzes the reversible formation of acyl-phosphate (acyl-PO(4)) from acyl-[acyl-carrier-protein] (acyl-ACP). This enzyme utilizes acyl-ACP as fatty acyl donor, but not acyl-CoA. The sequence is that of Phosphate acyltransferase from Anaeromyxobacter dehalogenans (strain 2CP-C).